The following is a 417-amino-acid chain: uncharacterized protein (417 aa).

A disordered region spans residues 1 to 24; it reads MSQPPINPLGQPQVPAAASPSGQP. The next 4 helical transmembrane spans lie at 54 to 74, 79 to 99, 117 to 137, and 143 to 163; these read VYDT…LLTA, LMLY…TLLI, AIVV…GAFV, and MLVF…LYFM. The segment covering 211 to 228 has biased composition (basic and acidic residues); sequence DLSASARMEEHEASQRQD. 2 disordered regions span residues 211-283 and 308-417; these read DLSA…FKDD and IMPA…RKNK. Over residues 312-322 the composition is skewed to polar residues; that stretch reads SSRSPNFSTGT. Residues 336-347 are compositionally biased toward low complexity; the sequence is EPSIPRVSSSSR. Positions 391-401 are enriched in polar residues; that stretch reads STANLSPSNPF.

This sequence belongs to the chlamydial CPn_0443/CT_005/TC_0273 family.

The protein localises to the cell membrane. This is an uncharacterized protein from Chlamydia pneumoniae (Chlamydophila pneumoniae).